We begin with the raw amino-acid sequence, 203 residues long: Ras-related protein Rab-13 (203 aa).

Positions 17, 18, 20, 21, 22, 23, and 40 each coordinate GTP. Residue Thr-22 coordinates Mg(2+). The Switch 1 signature appears at 31–45 (DNFNSTYISTIGIDF). Residue Thr-40 coordinates Mg(2+). Glycyl lysine isopeptide (Lys-Gly) (interchain with G-Cter in ubiquitin) cross-links involve residues Lys-46 and Lys-58. Asp-63 contributes to the Mg(2+) binding site. The Switch 2 motif lies at 63–80 (DTAGQERFKTITTAYYRG). The GTP site is built by Gly-66, Asn-121, Lys-122, Asp-124, Ala-152, and Lys-153. The disordered stretch occupies residues 173–203 (TGGRRSGNSSKPSSTDLKVSDKKNSNKCSLG). Ser-178 is modified (phosphoserine). A compositionally biased stretch (polar residues) spans 178–189 (SGNSSKPSSTDL). Cys-200 is subject to Cysteine methyl ester. Cys-200 carries S-geranylgeranyl cysteine lipidation. Positions 201 to 203 (SLG) are cleaved as a propeptide — removed in mature form.

Belongs to the small GTPase superfamily. Rab family. In terms of assembly, interacts (GTP-bound form) with MICALL2; competes with RAB8A and is involved in tight junctions assembly. Interacts (GTP-bound form) with MICALL1. Interacts (GTP-bound form) with MICAL1, MICAL3, MICALCL, EHBP1 and EHBP1L1; ternary complexes of RAB8A, RAB13 and either MICAL1 or EHBP1L1 are possible. Interacts with PRKACA; downstream effector of RAB13 involved in tight junction assembly. Interacts with GRB2; may recruit RAB13 to the leading edge of migrating endothelial cells where it can activate RHOA. Interacts (isoprenylated form) with PDE6D; dissociates RAB13 from membranes. Interacts with BICDL2/BICDR2. Interacts with LEPROT and LEPROTL1. The cofactor is Mg(2+). In terms of processing, ubiquitinated via 'Lys-11'-linked ubiquitination on Lys-46 and Lys-58; impairing the recruitment of guanosine diphosphate (GDP) dissociation inhibitor 1/GDI1. Highest levels found in lung, kidney, whole brain and spinal cord. Expressed in all tissues tested including Sertoli and germ cells (at protein level). Also detected in osteoclasts.

Its subcellular location is the cell membrane. The protein resides in the cytoplasmic vesicle membrane. The protein localises to the cell junction. It is found in the tight junction. It localises to the golgi apparatus. Its subcellular location is the trans-Golgi network membrane. The protein resides in the recycling endosome membrane. The protein localises to the cell projection. It is found in the lamellipodium. It catalyses the reaction GTP + H2O = GDP + phosphate + H(+). With respect to regulation, regulated by guanine nucleotide exchange factors (GEFs) including DENND1C, which promote the exchange of bound GDP for free GTP. Regulated by GTPase activating proteins (GAPs) which increase the GTP hydrolysis activity. Inhibited by GDP dissociation inhibitors (GDIs). Activated in response to insulin. Its function is as follows. The small GTPases Rab are key regulators of intracellular membrane trafficking, from the formation of transport vesicles to their fusion with membranes. Rabs cycle between an inactive GDP-bound form and an active GTP-bound form that is able to recruit to membranes different sets of downstream effectors directly responsible for vesicle formation, movement, tethering and fusion. RAB13 is involved in endocytic recycling and regulates the transport to the plasma membrane of transmembrane proteins like the tight junction protein OCLN/occludin. Thereby, it regulates the assembly and the activity of tight junctions. Moreover, it may also regulate tight junction assembly by activating the PKA signaling pathway and by reorganizing the actin cytoskeleton through the activation of the downstream effectors PRKACA and MICALL2 respectively. Through its role in tight junction assembly, may play a role in the establishment of Sertoli cell barrier. Plays also a role in angiogenesis through regulation of endothelial cells chemotaxis. Also involved in neurite outgrowth. Has also been proposed to play a role in post-Golgi membrane trafficking from the TGN to the recycling endosome. Finally, it has been involved in insulin-induced transport to the plasma membrane of the glucose transporter GLUT4 and therefore may play a role in glucose homeostasis. The protein is Ras-related protein Rab-13 of Rattus norvegicus (Rat).